Here is a 150-residue protein sequence, read N- to C-terminus: Large ribosomal subunit protein bL9 (150 aa).

It belongs to the bacterial ribosomal protein bL9 family.

In terms of biological role, binds to the 23S rRNA. This Saccharopolyspora erythraea (strain ATCC 11635 / DSM 40517 / JCM 4748 / NBRC 13426 / NCIMB 8594 / NRRL 2338) protein is Large ribosomal subunit protein bL9.